The following is a 179-amino-acid chain: Large ribosomal subunit protein uL6 (179 aa).

This sequence belongs to the universal ribosomal protein uL6 family. As to quaternary structure, part of the 50S ribosomal subunit.

In terms of biological role, this protein binds to the 23S rRNA, and is important in its secondary structure. It is located near the subunit interface in the base of the L7/L12 stalk, and near the tRNA binding site of the peptidyltransferase center. This is Large ribosomal subunit protein uL6 from Desulfovibrio desulfuricans (strain ATCC 27774 / DSM 6949 / MB).